The following is a 280-amino-acid chain: F-box only protein 27 (280 aa).

One can recognise an F-box domain in the interval 20-67 (VLDLSRLPPELLLLVLSHVPPRTLLMHCRRVCRAWRALVDGQALWLLL). Residues 101 to 277 (FCALRPLGRN…VTNSSVIIRV (177 aa)) enclose the FBA domain.

As to quaternary structure, part of a SCF (SKP1-cullin-F-box) protein ligase complex. Interacts with SKP1 and CUL1. As to expression, detected in brain, heart and muscle.

Functionally, substrate-recognition component of the SCF (SKP1-CUL1-F-box protein)-type E3 ubiquitin ligase complex. Able to recognize and bind complex-type oligosaccharides. This Mus musculus (Mouse) protein is F-box only protein 27 (Fbxo27).